The primary structure comprises 712 residues: Protein SDA1 homolog (712 aa).

At Thr234 the chain carries Phosphothreonine. Ser236 is subject to Phosphoserine. Disordered stretches follow at residues 488–573 and 662–712; these read TIDI…DMRI and VNEH…KKMK. Acidic residues-rich tracts occupy residues 491–501 and 516–559; these read IESEDDTDSND and GADD…ESGE. Basic and acidic residues predominate over residues 560-572; it reads ESAKAKKEKKDMR. Basic residues-rich tracts occupy residues 671–692 and 700–712; these read REKR…KVKK and ALRK…KKMK.

The protein belongs to the SDA1 family.

It is found in the nucleus. The protein localises to the nucleolus. Functionally, required for 60S pre-ribosomal subunits export to the cytoplasm. The protein is Protein SDA1 homolog (Mys45A) of Drosophila melanogaster (Fruit fly).